We begin with the raw amino-acid sequence, 414 residues long: Putative transporter YoaB (414 aa).

At 1–11 (MLDKIGIPKRL) the chain is on the cytoplasmic side. Residues 12-32 (AWGFLGVVLFMMGDGLEQGWL) form a helical membrane-spanning segment. Topologically, residues 33–47 (SPFLIENGLTVQQSA) are extracellular. Residues 48 to 68 (SIFSIYGIALAIASWFSGVCL) traverse the membrane as a helical segment. Topologically, residues 69–75 (EAFGAKR) are cytoplasmic. A helical membrane pass occupies residues 76-96 (TMFMGLLFYVIGTAAFIVFGF). Over 97-107 (EQLNLPVMYVT) the chain is Extracellular. Residues 108–128 (YFVKGLGYPLFAYSFLTWVIY) form a helical membrane-spanning segment. Topologically, residues 129–136 (RTPQSKLS) are cytoplasmic. A helical transmembrane segment spans residues 137-157 (TAVGWFWIAYCLGMFVFGAWY). The Extracellular segment spans residues 158–167 (SSYAIKAFGY). Residues 168–188 (LNTLWSSIFWVCLGAFFALFI) traverse the membrane as a helical segment. Topologically, residues 189-219 (NKDRFEKKKRKRSETAEELLKGVTILFTNPR) are cytoplasmic. The chain crosses the membrane as a helical span at residues 220-240 (VLTGGIIRIINSIGTYGFPVF). Residues 241–255 (LPMHMAQHGISTNVW) lie on the Extracellular side of the membrane. Residues 256–276 (LQIWGTIFLGNIVFNLIFGIV) traverse the membrane as a helical segment. Over 277–286 (GDKFGWKNTV) the chain is Cytoplasmic. The helical transmembrane segment at 287 to 307 (IWFGGVGCGIFTVLLYYAPVF) threads the bilayer. Residues 308–316 (SGGSLAVVS) are Extracellular-facing. The chain crosses the membrane as a helical span at residues 317-337 (VIGFIWGGLLAGYVPIGAIVP). At 338 to 343 (TVAGKD) the chain is on the cytoplasmic side. Residues 344 to 364 (KGAAMSVLNLAAGLSAFVGPA) form a helical membrane-spanning segment. Residues 365 to 375 (LAWLFIGLVGA) lie on the Extracellular side of the membrane. Residues 376 to 398 (QGVVWIFAALYLASAVLTKCIHI) form a helical membrane-spanning segment. Topologically, residues 399–414 (PEEKAVKEETSPQYAS) are cytoplasmic.

It belongs to the major facilitator superfamily. Sugar transporter (TC 2.A.1.1) family. CsbX subfamily.

The protein resides in the cell membrane. This chain is Putative transporter YoaB (yoaB), found in Bacillus subtilis (strain 168).